The following is a 494-amino-acid chain: Glutamate--tRNA ligase (494 aa).

Positions 15-25 match the 'HIGH' region motif; the sequence is PSPTGNPHVGL. The Zn(2+) site is built by Cys112, Cys114, Cys139, and Glu141. Positions 260–264 match the 'KMSKS' region motif; the sequence is KLSKR. Lys263 is an ATP binding site.

This sequence belongs to the class-I aminoacyl-tRNA synthetase family. Glutamate--tRNA ligase type 1 subfamily. As to quaternary structure, monomer. Zn(2+) serves as cofactor.

It localises to the cytoplasm. It catalyses the reaction tRNA(Glu) + L-glutamate + ATP = L-glutamyl-tRNA(Glu) + AMP + diphosphate. Catalyzes the attachment of glutamate to tRNA(Glu) in a two-step reaction: glutamate is first activated by ATP to form Glu-AMP and then transferred to the acceptor end of tRNA(Glu). In Streptomyces coelicolor (strain ATCC BAA-471 / A3(2) / M145), this protein is Glutamate--tRNA ligase.